Here is a 488-residue protein sequence, read N- to C-terminus: Transmembrane protein 39A (488 aa).

N-linked (GlcNAc...) asparagine glycosylation is found at Asn-31 and Asn-39. A run of 8 helical transmembrane segments spans residues 72-92 (SLLF…IQYI), 110-130 (TSLN…VMLA), 154-174 (VLIS…CWTL), 182-202 (SVLN…LCCF), 287-307 (EVLF…LCFV), 319-339 (CEHL…QLLP), 420-440 (LLNL…YSLL), and 446-466 (NHTL…FKLL).

Belongs to the TMEM39 family. As to quaternary structure, interacts with SACM1L, SEC23A and SEC24A. (Microbial infection) Interacts with encephalomyocarditis virus (EMCV) major capsid proteins VP1 and VP2. Up-regulated in brain tumor glioblastoma multiforme cells (at protein level).

The protein localises to the endoplasmic reticulum membrane. In terms of biological role, regulates autophagy by controlling the spatial distribution and levels of the intracellular phosphatidylinositol 4-phosphate (PtdIns(4)P) pools. Modulates (PtdIns(4)P) levels by regulating the ER-to-Golgi trafficking of the phosphatidylinositide phosphatase SACM1L. Functionally, (Microbial infection) Positively regulates the replication of encephalomyocarditis virus (EMCV) via autophagy-dependent pathway. The sequence is that of Transmembrane protein 39A (TMEM39A) from Homo sapiens (Human).